The sequence spans 396 residues: Elongation factor Tu (396 aa).

The tr-type G domain maps to 10 to 206; sequence KPHVNVGTIG…ALDDYIPEPE (197 aa). The G1 stretch occupies residues 19–26; the sequence is GHVDHGKT. 19–26 provides a ligand contact to GTP; the sequence is GHVDHGKT. Thr26 is a binding site for Mg(2+). The segment at 60–64 is G2; that stretch reads GITIA. Residues 81–84 form a G3 region; that stretch reads DCPG. GTP contacts are provided by residues 81–85 and 136–139; these read DCPGH and NKAD. The interval 136 to 139 is G4; sequence NKAD. The interval 174 to 176 is G5; sequence SAL.

Belongs to the TRAFAC class translation factor GTPase superfamily. Classic translation factor GTPase family. EF-Tu/EF-1A subfamily. As to quaternary structure, monomer.

It localises to the cytoplasm. It catalyses the reaction GTP + H2O = GDP + phosphate + H(+). In terms of biological role, GTP hydrolase that promotes the GTP-dependent binding of aminoacyl-tRNA to the A-site of ribosomes during protein biosynthesis. This chain is Elongation factor Tu, found in Methylococcus capsulatus (strain ATCC 33009 / NCIMB 11132 / Bath).